Consider the following 226-residue polypeptide: Urease accessory protein UreF (226 aa).

The protein belongs to the UreF family. UreD, UreF and UreG form a complex that acts as a GTP-hydrolysis-dependent molecular chaperone, activating the urease apoprotein by helping to assemble the nickel containing metallocenter of UreC. The UreE protein probably delivers the nickel.

The protein resides in the cytoplasm. Its function is as follows. Required for maturation of urease via the functional incorporation of the urease nickel metallocenter. The sequence is that of Urease accessory protein UreF from Corynebacterium glutamicum (strain R).